A 282-amino-acid polypeptide reads, in one-letter code: Ermin (282 aa).

2 stretches are compositionally biased toward polar residues: residues 1–12 and 21–30; these read MTDTPVTLSGSE and NGQQPSSQTR. The interval 1–71 is disordered; the sequence is MTDTPVTLSG…NSKGNVLPRG (71 aa). Residues Ser-72, Ser-212, Ser-224, Ser-228, and Ser-231 each carry the phosphoserine modification. The segment covering 212-224 has biased composition (basic and acidic residues); the sequence is SPLKEESLAREDS. A disordered region spans residues 212-246; that stretch reads SPLKEESLAREDSPLSSPSSQPGTPDEQLVLGKKG. Residues 225 to 234 are compositionally biased toward polar residues; sequence PLSSPSSQPG. Thr-235 bears the Phosphothreonine mark. A binds actin region spans residues 263–282; the sequence is KIRKGNTKQRIDEFESMMHL.

As to quaternary structure, binds actin. As to expression, expressed specifically by the oligodendrocytes. Highest expression seen in the spinal cord followed by brainstem, cerebellum, thalamus, and hypothalamus. In the myelin sheath, found mainly in the abaxon and the lateral few terminal loops. Its apposition to the myelinated axon, through the latter, defines an axonal subregion, termed juxtanode, at the Ranvier node-paranode junction.

The protein resides in the cytoplasm. The protein localises to the cytoskeleton. Functionally, plays a role in cytoskeletal rearrangements during the late wrapping and/or compaction phases of myelinogenesis as well as in maintenance and stability of myelin sheath in the adult. May play an important role in late-stage oligodendroglia maturation, myelin/Ranvier node formation during CNS development, and in the maintenance and plasticity of related structures in the mature CNS. This chain is Ermin (Ermn), found in Rattus norvegicus (Rat).